The primary structure comprises 1162 residues: MTDVNCLTSEHIAPTTTTASPPGTPSKNAATDPVEPTSPFVLRAPPSAKSKLILQNMEEVLNSVKQKHREKHKRKREEKRRAALMEDQKSTTEEVKANAKEKPQPLREKSSQENGLKNGRRRSSPLKSSTPVADNQSIMKHFAKAGKPENVGVSPVSTAKPKPTTNVFEFMMNARNRSLGVNEGGAESPADQEIGSEAATPTTKRKLLLQEWNERKGGAKRRLADEARGEFIELQMEQRAKRLRKMLTKTDAKEVTAPSSAPTDPTVKRLRGRPRSRRISSMDAQNQIVESKPPVVKAKDQDPGTEELLSKLSSPTKKRDSLLGYFPKVESPKELAEKVIIAIETPPMETPKRRTLRRKSQQETPIVAESTPSSRPRRSCVGKARYDYDLETSPGKQQKAKPQKADESVEIIDLDNSNPAATPKKLAPLFVRQLPKPSPDPSVLKARQAFLQSGVPDKIRQEQIRQKNFDQMYEDSYEVFPRLAHIGCESFGSKNGPLDIPFALRAEEEYSEVTKALPANKRRAKASSITSCLPADFTSSKTLNKFNYATLPQLENKRGFVKLWKNDFDRFPTFKCYNQMREKYRHFSAIDSAQDTQQMGESLVVTRRTRRSMEQNMAQNEEEAKPPPSAPNGELLFTEKYKPLLFEQVLVNLTPVQELREFLSSWSGNGGSNRNSQGMDDTFDMSNDSASMGSSSNTMVLVGPSSSGKTNAVFTLANDMNFNVLEINAGMKRTGKKLIQELQEATQSHQIRKDGKAGGGSSQQLLQKLQKSGLKAKAAAVEPPSEVRKSLILIEDADILFDNLDAGFTDAIYTLAASSKRPVIVVATDPNCAHLQRLMQQNIIHFQAPNALNISRFLAVLSLMENCPIELDELISVYLYNQQNLRKTLMELQFYIQSGGDSTRDRTGGGIKSPTKTSNSRLATVDGSRIHQRFFEFFTSPQNVQYRIPFPVDFSLLRLNLPDLMASSAMLKEQQAAGGGSRTAAKRKSRSPKKAWLSSATGQKSDGHSSSLATLASFYDNISVASLMDSDCSDRLQWHLSEEIGHLLVEQALQTGLATKECPYNLFDKPVQRFSICQHLGNGVLRSDSAKSLDFEPALRSICRSEKERAGLERKSSRFYHYLRNHTVNVTSFTTDYFDTACSTFQSAAPSSEPTMEAEPKD.

Disordered regions lie at residues 1 to 136 (MTDV…ADNQ), 144 to 163 (KAGKPENVGVSPVSTAKPKP), 179 to 202 (LGVNEGGAESPADQEIGSEAATPT), 249 to 319 (KTDA…TKKR), 348 to 380 (METPKRRTLRRKSQQETPIVAESTPSSRPRRSC), 611 to 634 (RSMEQNMAQNEEEAKPPPSAPNGE), and 666 to 697 (WSGNGGSNRNSQGMDDTFDMSNDSASMGSSSN). The span at 65-78 (KQKHREKHKRKREE) shows a compositional bias: basic residues. The segment covering 79 to 111 (KRRAALMEDQKSTTEEVKANAKEKPQPLREKSS) has biased composition (basic and acidic residues). Over residues 125–136 (PLKSSTPVADNQ) the composition is skewed to polar residues. Residues 268-278 (KRLRGRPRSRR) are compositionally biased toward basic residues. Low complexity-rich tracts occupy residues 666 to 676 (WSGNGGSNRNS) and 684 to 697 (DMSNDSASMGSSSN). 703-710 (GPSSSGKT) provides a ligand contact to ATP. Disordered stretches follow at residues 900 to 923 (GDSTRDRTGGGIKSPTKTSNSRLA) and 975 to 1008 (QAAGGGSRTAAKRKSRSPKKAWLSSATGQKSDGH). A compositionally biased stretch (basic residues) spans 984–993 (AAKRKSRSPK). Positions 998 to 1008 (SSATGQKSDGH) are enriched in polar residues.

The protein belongs to the ELG1 family. In terms of assembly, component of a heteropentameric Elg1 RFC-like complex composed of one large subunit (elg1) and four small subunits (RfC4, RfC38, CG8142 and RfC3). As part of the complex, might interact with the Enok complex, composed of enok, Br140, Eaf6 and Ing5. Within the Enok complex, interacts directly with Br140. In terms of tissue distribution, expressed at higher levels in the germline nurse cells than in the somatic follicle cells.

The protein resides in the nucleus. Has an important role in DNA replication and in maintaining genome integrity during replication stress. Promotes PCNA deubiquitination. As component of the Elg1 RFC-like complex, regulates the functions of the DNA polymerase processivity factor PCNA by unloading it from DNA after replication during the S phase of the cell cycle. The PCNA-unloading might be regulated via interaction with the Enok acetyltransferase complex. Might have a role in restarting of stalled/regressed replication forks during replication stress. In the ovaries, has a role in nurse cell endoreplication. The chain is Enhanced level of genomic instability 1 from Drosophila melanogaster (Fruit fly).